Consider the following 694-residue polypeptide: Putative bifunctional polynucleotide kinase/RNA ligase (694 aa).

A ligase domain region spans residues 1–385 (MLHVSRLLAN…TKQALNNKLA (385 aa)). The segment at 394–694 (KQLLVLIGIS…FNVCRDYLEF (301 aa)) is bifunctional 5'-OH polynucleotide kinase/polynucleotide 3'-phosphatase. 401-408 (GISGSGKS) contacts ATP.

The catalysed reaction is a 5'-end dephospho-2'-deoxyribonucleoside-DNA + ATP = a 5'-end 5'-phospho-2'-deoxyribonucleoside-DNA + ADP + H(+). It carries out the reaction ATP + (ribonucleotide)n-3'-hydroxyl + 5'-phospho-(ribonucleotide)m = (ribonucleotide)n+m + AMP + diphosphate.. Functionally, trifunctional enzyme that possesses a bifunctional polynucleotide kinase/phosphatase activity and an ATP-dependent RNA ligase activity. May therefore play a role to evade an RNA damage-based host response. The sequence is that of Putative bifunctional polynucleotide kinase/RNA ligase (PNK/PNL) from Autographa californica nuclear polyhedrosis virus (AcMNPV).